Consider the following 154-residue polypeptide: Superoxide dismutase [Cu-Zn] (154 aa).

The Cu cation site is built by H47, H49, and H64. A disulfide bond links C58 and C147. Positions 64, 72, 81, and 84 each coordinate Zn(2+). H121 contributes to the Cu cation binding site. The segment covering 125 to 136 (DDLGKGGNEESL) has biased composition (basic and acidic residues). Residues 125-144 (DDLGKGGNEESLKTGNAGPR) form a disordered region. R144 contacts substrate.

Belongs to the Cu-Zn superoxide dismutase family. Homodimer. Requires Cu cation as cofactor. Zn(2+) serves as cofactor.

It localises to the cytoplasm. The catalysed reaction is 2 superoxide + 2 H(+) = H2O2 + O2. Destroys radicals which are normally produced within the cells and which are toxic to biological systems. The sequence is that of Superoxide dismutase [Cu-Zn] (sod-1) from Neurospora crassa (strain ATCC 24698 / 74-OR23-1A / CBS 708.71 / DSM 1257 / FGSC 987).